The primary structure comprises 156 residues: Large ribosomal subunit protein uL22 (156 aa).

Belongs to the universal ribosomal protein uL22 family. As to quaternary structure, part of the 50S ribosomal subunit.

Functionally, this protein binds specifically to 23S rRNA. It makes multiple contacts with different domains of the 23S rRNA in the assembled 50S subunit and ribosome. In terms of biological role, the globular domain of the protein is located near the polypeptide exit tunnel on the outside of the subunit, while an extended beta-hairpin is found that lines the wall of the exit tunnel in the center of the 70S ribosome. This is Large ribosomal subunit protein uL22 from Halobacterium salinarum (strain ATCC 700922 / JCM 11081 / NRC-1) (Halobacterium halobium).